The sequence spans 412 residues: Lysosomal phospholipase A and acyltransferase (412 aa).

Positions 1 to 33 (MDRHLCTCRETQLRSGLLLPLFLLMMLADLTLP) are cleaved as a signal peptide. A substrate-binding site is contributed by Asp-46. Cys-65 and Cys-89 form a disulfide bridge. Asn-99 carries an N-linked (GlcNAc...) asparagine glycan. The Acyl-ester intermediate role is filled by Ser-198. Residue Ser-198 participates in Zn(2+) binding. A substrate-binding site is contributed by Met-199. N-linked (GlcNAc...) asparagine glycans are attached at residues Asn-273 and Asn-289. Cys-355 is a binding site for Zn(2+). Active-site charge relay system residues include Asp-360 and His-392. His-392 provides a ligand contact to Zn(2+). N-linked (GlcNAc...) asparagine glycosylation occurs at Asn-398.

The protein belongs to the AB hydrolase superfamily. Lipase family. Post-translationally, N-glycosylated. N-glycosylation is important for maturation of the enzyme and normal subcellular location. Detected in blood plasma. Detected in alveolar macrophages (at protein level). Detected in heart, liver, spleen, kidney, thymus, brain and lung.

Its subcellular location is the secreted. It is found in the lysosome. It localises to the membrane. It catalyses the reaction a 1,2-diacyl-sn-glycero-3-phosphocholine + H2O = a 2-acyl-sn-glycero-3-phosphocholine + a fatty acid + H(+). The enzyme catalyses 1-hexadecanoyl-2-(9Z-octadecenoyl)-sn-glycero-3-phosphocholine + H2O = 2-(9Z-octadecenoyl)-sn-glycero-3-phosphocholine + hexadecanoate + H(+). It carries out the reaction 1,2-di-(9Z-octadecenoyl)-sn-glycero-3-phosphocholine + H2O = 2-(9Z-octadecenoyl)-sn-glycero-3-phosphocholine + (9Z)-octadecenoate + H(+). The catalysed reaction is 1-hexadecanoyl-2-glutaroyl-sn-glycero-3-phosphocholine + H2O = 2-glutaroyl-sn-glycero-3-phosphocholine + hexadecanoate + H(+). It catalyses the reaction 1-hexadecanoyl-2-nonadioyl-sn-glycero-3-phosphocholine + H2O = 2-nonadioyl-sn-glycero-3-phosphocholine + hexadecanoate + H(+). The enzyme catalyses 1-hexadecanoyl-2-(5-oxopentanoyl)-sn-glycero-3-phosphocholine + H2O = 2-(5-oxopentanoyl)-sn-glycero-3-phosphocholine + hexadecanoate + H(+). It carries out the reaction 1-hexadecanoyl-2-(9-oxononanoyl)-sn-glycero-3-phosphocholine + H2O = 2-(9-oxononanoyl)-sn-glycero-3-phosphocholine + hexadecanoate + H(+). The catalysed reaction is 1,2-dihexadecanoyl-sn-glycero-3-phosphocholine + H2O = 2-hexadecanoyl-sn-glycero-3-phosphocholine + hexadecanoate + H(+). It catalyses the reaction a 1,2-diacyl-sn-glycero-3-phosphocholine + H2O = a 1-acyl-sn-glycero-3-phosphocholine + a fatty acid + H(+). The enzyme catalyses 1-hexadecanoyl-2-(9Z-octadecenoyl)-sn-glycero-3-phosphocholine + H2O = 1-hexadecanoyl-sn-glycero-3-phosphocholine + (9Z)-octadecenoate + H(+). It carries out the reaction 1,2-di-(9Z-octadecenoyl)-sn-glycero-3-phosphocholine + H2O = 1-(9Z-octadecenoyl)-sn-glycero-3-phosphocholine + (9Z)-octadecenoate + H(+). The catalysed reaction is 1,2-dihexadecanoyl-sn-glycero-3-phosphocholine + H2O = 1-hexadecanoyl-sn-glycero-3-phosphocholine + hexadecanoate + H(+). It catalyses the reaction a 1-acyl-sn-glycero-3-phosphocholine + H2O = sn-glycerol 3-phosphocholine + a fatty acid + H(+). The enzyme catalyses 1-hexadecanoyl-sn-glycero-3-phosphocholine + H2O = sn-glycerol 3-phosphocholine + hexadecanoate + H(+). It carries out the reaction N-(acetyl)-sphing-4-enine + a 1,2-diacyl-sn-glycero-3-phosphoethanolamine = 1-O-acyl-N-(acetyl)-sphing-4-enine + a 2-acyl-sn-glycero-3-phosphoethanolamine. The catalysed reaction is 1-hexadecanoyl-2-(9Z-octadecenoyl)-sn-glycero-3-phosphoethanolamine + N-(acetyl)-sphing-4-enine = 2-(9Z-octadecenoyl)-sn-glycero-3-phosphoethanolamine + 1-hexadecanoyl-N-(acetyl)-sphing-4-enine. It catalyses the reaction 1-hexadecanoyl-2-(9Z,12Z-octadecadienoyl)-sn-glycero-3-phosphoethanolamine + N-(acetyl)-sphing-4-enine = 2-(9Z,12Z)-octadecadienoyl-sn-glycero-3-phosphoethanolamine + 1-hexadecanoyl-N-(acetyl)-sphing-4-enine. The enzyme catalyses 1-hexadecanoyl-2-(5Z,8Z,11Z,14Z-eicosatetraenoyl)-sn-glycero-3-phosphoethanolamine + N-(acetyl)-sphing-4-enine = 2-(5Z,8Z,11Z,14Z)-eicosatetraenoyl-sn-glycero-3-phosphoethanolamine + 1-hexadecanoyl-N-(acetyl)-sphing-4-enine. It carries out the reaction N-(acetyl)-sphing-4-enine + a 1,2-diacyl-sn-glycero-3-phosphoethanolamine = 1-O-acyl-N-(acetyl)-sphing-4-enine + a 1-acyl-sn-glycero-3-phosphoethanolamine. The catalysed reaction is 1-hexadecanoyl-2-(9Z-octadecenoyl)-sn-glycero-3-phosphoethanolamine + N-(acetyl)-sphing-4-enine = 1-(9Z-octadecenoyl)-N-(acetyl)-sphing-4-enine + 1-hexadecanoyl-sn-glycero-3-phosphoethanolamine. It catalyses the reaction 1-hexadecanoyl-2-(9Z,12Z-octadecadienoyl)-sn-glycero-3-phosphoethanolamine + N-(acetyl)-sphing-4-enine = 1-(9Z,12Z-octadecadienoyl)-N-acetylsphing-4-enine + 1-hexadecanoyl-sn-glycero-3-phosphoethanolamine. The enzyme catalyses 1-hexadecanoyl-2-(5Z,8Z,11Z,14Z-eicosatetraenoyl)-sn-glycero-3-phosphoethanolamine + N-(acetyl)-sphing-4-enine = 1-(5Z,8Z,11Z,14Z)-eicosatetraenoyl-N-(acetyl)-sphing-4-enine + 1-hexadecanoyl-sn-glycero-3-phosphoethanolamine. It carries out the reaction N-(acetyl)-sphing-4-enine + a 1,2-diacyl-sn-glycero-3-phosphocholine = 1-O-acyl-N-(acetyl)-sphing-4-enine + a 2-acyl-sn-glycero-3-phosphocholine. The catalysed reaction is 1-hexadecanoyl-2-(9Z-octadecenoyl)-sn-glycero-3-phosphocholine + N-(acetyl)-sphing-4-enine = 1-hexadecanoyl-N-(acetyl)-sphing-4-enine + 2-(9Z-octadecenoyl)-sn-glycero-3-phosphocholine. It catalyses the reaction 1-hexadecanoyl-2-(9Z,12Z-octadecadienoyl)-sn-glycero-3-phosphocholine + N-(acetyl)-sphing-4-enine = 2-(9Z,12Z-octadecadienoyl)-sn-glycero-3-phosphocholine + 1-hexadecanoyl-N-(acetyl)-sphing-4-enine. The enzyme catalyses 1-hexadecanoyl-2-(5Z,8Z,11Z,14Z-eicosatetraenoyl)-sn-glycero-3-phosphocholine + N-(acetyl)-sphing-4-enine = 1-hexadecanoyl-N-(acetyl)-sphing-4-enine + 2-(5Z,8Z,11Z,14Z)-eicosatetraenoyl-sn-glycero-3-phosphocholine. It carries out the reaction 1-hexadecanoyl-2-(4Z,7Z,10Z,13Z,16Z,19Z-docosahexaenoyl)-sn-glycero-3-phosphocholine + N-(acetyl)-sphing-4-enine = 2-(4Z,7Z,10Z,13Z,16Z,19Z-docosahexaenoyl)-sn-glycero-3-phosphocholine + 1-hexadecanoyl-N-(acetyl)-sphing-4-enine. The catalysed reaction is 1-hexadecanoyl-2-nonadioyl-sn-glycero-3-phosphocholine + N-(acetyl)-sphing-4-enine = 2-nonadioyl-sn-glycero-3-phosphocholine + 1-hexadecanoyl-N-(acetyl)-sphing-4-enine. It catalyses the reaction 1-octadecanoyl-2-(9Z-octadecenoyl)-sn-glycero-3-phosphocholine + N-(acetyl)-sphing-4-enine = 1-octadecanoyl-N-(acetyl)-sphing-4-enine + 2-(9Z-octadecenoyl)-sn-glycero-3-phosphocholine. The enzyme catalyses 1-(9Z)-octadecenoyl-2-octadecanoyl-sn-glycero-3-phosphocholine + N-(acetyl)-sphing-4-enine = 2-octadecanoyl-sn-glycero-3-phosphocholine + 1-(9Z-octadecenoyl)-N-(acetyl)-sphing-4-enine. It carries out the reaction 1-octadecanoyl-2-(5Z,8Z,11Z,14Z-eicosatetraenoyl)-sn-glycero-3-phosphocholine + N-(acetyl)-sphing-4-enine = 1-octadecanoyl-N-(acetyl)-sphing-4-enine + 2-(5Z,8Z,11Z,14Z)-eicosatetraenoyl-sn-glycero-3-phosphocholine. The catalysed reaction is 1-(9Z-octadecenoyl)-2-hexadecanoyl-sn-glycero-3-phosphocholine + N-(acetyl)-sphing-4-enine = 1-(9Z-octadecenoyl)-N-(acetyl)-sphing-4-enine + 2-hexadecanoyl-sn-glycero-3-phosphocholine. It catalyses the reaction N-(acetyl)-sphing-4-enine + a 1,2-diacyl-sn-glycero-3-phosphocholine = 1-O-acyl-N-(acetyl)-sphing-4-enine + a 1-acyl-sn-glycero-3-phosphocholine. The enzyme catalyses 1-hexadecanoyl-2-(9Z-octadecenoyl)-sn-glycero-3-phosphocholine + N-(acetyl)-sphing-4-enine = 1-(9Z-octadecenoyl)-N-(acetyl)-sphing-4-enine + 1-hexadecanoyl-sn-glycero-3-phosphocholine. It carries out the reaction 1-hexadecanoyl-2-(9Z,12Z-octadecadienoyl)-sn-glycero-3-phosphocholine + N-(acetyl)-sphing-4-enine = 1-(9Z,12Z-octadecadienoyl)-N-acetylsphing-4-enine + 1-hexadecanoyl-sn-glycero-3-phosphocholine. The catalysed reaction is 1-hexadecanoyl-2-(5Z,8Z,11Z,14Z-eicosatetraenoyl)-sn-glycero-3-phosphocholine + N-(acetyl)-sphing-4-enine = 1-(5Z,8Z,11Z,14Z)-eicosatetraenoyl-N-(acetyl)-sphing-4-enine + 1-hexadecanoyl-sn-glycero-3-phosphocholine. It catalyses the reaction 1-hexadecanoyl-2-(4Z,7Z,10Z,13Z,16Z,19Z-docosahexaenoyl)-sn-glycero-3-phosphocholine + N-(acetyl)-sphing-4-enine = 1-(4Z,7Z,10Z,13Z,16Z,19Z-docosahexaenoyl)-N-(acetyl)-sphing-4-enine + 1-hexadecanoyl-sn-glycero-3-phosphocholine. The enzyme catalyses 1-octadecanoyl-2-(9Z-octadecenoyl)-sn-glycero-3-phosphocholine + N-(acetyl)-sphing-4-enine = 1-(9Z-octadecenoyl)-N-(acetyl)-sphing-4-enine + 1-octadecanoyl-sn-glycero-3-phosphocholine. It carries out the reaction 1-octadecanoyl-2-(9Z,12Z)-octadecadienoyl-sn-glycero-3-phosphocholine + N-(acetyl)-sphing-4-enine = 1-(9Z,12Z-octadecadienoyl)-N-acetylsphing-4-enine + 1-octadecanoyl-sn-glycero-3-phosphocholine. The catalysed reaction is 1-(9Z-octadecenoyl)-2-hexadecanoyl-sn-glycero-3-phosphocholine + N-(acetyl)-sphing-4-enine = 1-hexadecanoyl-N-(acetyl)-sphing-4-enine + 1-(9Z-octadecenoyl)-sn-glycero-3-phosphocholine. It catalyses the reaction 1-(9Z)-octadecenoyl-2-octadecanoyl-sn-glycero-3-phosphocholine + N-(acetyl)-sphing-4-enine = 1-octadecanoyl-N-(acetyl)-sphing-4-enine + 1-(9Z-octadecenoyl)-sn-glycero-3-phosphocholine. The enzyme catalyses 1,2-di-(9Z-octadecenoyl)-sn-glycero-3-phosphocholine + N-(acetyl)-sphing-4-enine = 1-(9Z-octadecenoyl)-N-(acetyl)-sphing-4-enine + 1-(9Z-octadecenoyl)-sn-glycero-3-phosphocholine. It carries out the reaction 1-octadecanoyl-2-(5Z,8Z,11Z,14Z-eicosatetraenoyl)-sn-glycero-3-phosphocholine + N-(acetyl)-sphing-4-enine = 1-(5Z,8Z,11Z,14Z)-eicosatetraenoyl-N-(acetyl)-sphing-4-enine + 1-octadecanoyl-sn-glycero-3-phosphocholine. The catalysed reaction is a 1,2-diacyl-sn-glycero-3-phospho-L-serine + N-(acetyl)-sphing-4-enine = a 2-acyl-sn-glycero-3-phospho-L-serine + 1-O-acyl-N-(acetyl)-sphing-4-enine. It catalyses the reaction 1-octadecanoyl-2-(9Z-octadecenoyl)-sn-glycero-3-phospho-L-serine + N-(acetyl)-sphing-4-enine = 2-(9Z-octadecenoyl)-sn-glycero-3-phospho-L-serine + 1-octadecanoyl-N-(acetyl)-sphing-4-enine. The enzyme catalyses a 1,2-diacyl-sn-glycero-3-phospho-L-serine + N-(acetyl)-sphing-4-enine = 1-O-acyl-N-(acetyl)-sphing-4-enine + a 1-acyl-sn-glycero-3-phospho-L-serine. It carries out the reaction 1-octadecanoyl-2-(9Z-octadecenoyl)-sn-glycero-3-phospho-L-serine + N-(acetyl)-sphing-4-enine = 1-octadecanoyl-sn-glycero-3-phosphoserine + 1-(9Z-octadecenoyl)-N-(acetyl)-sphing-4-enine. The catalysed reaction is a 1,2-diacyl-sn-glycero-3-phospho-(1'-sn-glycerol) + N-(acetyl)-sphing-4-enine = 2-acyl-sn-glycero-3-phospho-(1'-sn-glycerol) + 1-O-acyl-N-(acetyl)-sphing-4-enine. It catalyses the reaction 1-octadecanoyl-2-(9Z-octadecenoyl)-sn-glycero-3-phospho-(1'-sn-glycerol) + N-(acetyl)-sphing-4-enine = 2-(9Z-octadecenoyl)-sn-glycero-3-phospho-(1'-sn-glycerol) + 1-octadecanoyl-N-(acetyl)-sphing-4-enine. The enzyme catalyses a 1,2-diacyl-sn-glycero-3-phospho-(1'-sn-glycerol) + N-(acetyl)-sphing-4-enine = 1-O-acyl-N-(acetyl)-sphing-4-enine + 1-acyl-sn-glycero-3-phospho-(1'-sn-glycerol). It carries out the reaction 1-octadecanoyl-2-(9Z-octadecenoyl)-sn-glycero-3-phospho-(1'-sn-glycerol) + N-(acetyl)-sphing-4-enine = 1-octadecanoyl-sn-glycero-3-phospho-(1'-sn-glycerol) + 1-(9Z-octadecenoyl)-N-(acetyl)-sphing-4-enine. The catalysed reaction is an N-acylethanolamine + a 1,2-diacyl-sn-glycero-3-phosphocholine = 2-(acylamino)ethyl fatty acid + a 2-acyl-sn-glycero-3-phosphocholine. It catalyses the reaction an N-acylethanolamine + a 1,2-diacyl-sn-glycero-3-phosphocholine = 2-(acylamino)ethyl fatty acid + a 1-acyl-sn-glycero-3-phosphocholine. The enzyme catalyses N-(5Z,8Z,11Z,14Z-eicosatetraenoyl)-ethanolamine + 1,2-di-(9Z-octadecenoyl)-sn-glycero-3-phosphocholine = 2-[(5Z,8Z,11Z,14Z)-eicosatetraenoylamino]ethyl (9Z)-octadecenoate + (9Z-octadecenoyl)-sn-glycero-3-phosphocholine. It carries out the reaction N-(9Z-octadecenoyl) ethanolamine + 1,2-di-(9Z-octadecenoyl)-sn-glycero-3-phosphocholine = 2-[(9Z)-octadecenoylamino]ethyl (9Z)-octadecenoate + (9Z-octadecenoyl)-sn-glycero-3-phosphocholine. The catalysed reaction is a 3-acyl-sn-glycerol + a 1,2-diacyl-sn-glycero-3-phosphocholine = a 1,3-diacylglycerol + a 1-acyl-sn-glycero-3-phosphocholine. It catalyses the reaction a 3-acyl-sn-glycerol + a 1,2-diacyl-sn-glycero-3-phosphocholine = a 1,3-diacylglycerol + a 2-acyl-sn-glycero-3-phosphocholine. The enzyme catalyses 3-(9Z-octadecenoyl)-sn-glycerol + 1,2-di-(9Z-octadecenoyl)-sn-glycero-3-phosphocholine = 1,3-di-(9Z-octadecenoyl)-glycerol + (9Z-octadecenoyl)-sn-glycero-3-phosphocholine. It carries out the reaction 3-hexadecanoyl-sn-glycerol + 1,2-di-(9Z-octadecenoyl)-sn-glycero-3-phosphocholine = 1-(9Z)-octadecenoyl-3-hexadecanoyl-sn-glycerol + (9Z-octadecenoyl)-sn-glycero-3-phosphocholine. The catalysed reaction is a 1-acyl-sn-glycerol + a 1,2-diacyl-sn-glycero-3-phosphocholine = a 1,3-diacylglycerol + a 2-acyl-sn-glycero-3-phosphocholine. It catalyses the reaction a 1-acyl-sn-glycerol + a 1,2-diacyl-sn-glycero-3-phosphocholine = a 1,3-diacylglycerol + a 1-acyl-sn-glycero-3-phosphocholine. The enzyme catalyses 1-(9Z-octadecenoyl)-sn-glycerol + 1,2-di-(9Z-octadecenoyl)-sn-glycero-3-phosphocholine = 1,3-di-(9Z-octadecenoyl)-glycerol + (9Z-octadecenoyl)-sn-glycero-3-phosphocholine. It carries out the reaction 1-hexadecanoyl-sn-glycerol + 1,2-di-(9Z-octadecenoyl)-sn-glycero-3-phosphocholine = 1-hexadecanoyl-3-(9Z)-octadecenoyl-sn-glycerol + (9Z-octadecenoyl)-sn-glycero-3-phosphocholine. The catalysed reaction is a 2-acylglycerol + a 1,2-diacyl-sn-glycero-3-phosphocholine = a 1,2-diacylglycerol + a 2-acyl-sn-glycero-3-phosphocholine. It catalyses the reaction a 2-acylglycerol + a 1,2-diacyl-sn-glycero-3-phosphocholine = a 1,2-diacylglycerol + a 1-acyl-sn-glycero-3-phosphocholine. The enzyme catalyses 2-hexadecanoylglycerol + 1,2-di-(9Z-octadecenoyl)-sn-glycero-3-phosphocholine = 1-(9Z)-octadecenoyl-2-hexadecanoylglycerol + (9Z-octadecenoyl)-sn-glycero-3-phosphocholine. It carries out the reaction 1-O-alkylglycerol + a 1,2-diacyl-sn-glycero-3-phosphocholine = 1-O-alkyl-3-acylglycerol + a 1-acyl-sn-glycero-3-phosphocholine. The catalysed reaction is 1-O-alkylglycerol + a 1,2-diacyl-sn-glycero-3-phosphocholine = 1-O-alkyl-3-acylglycerol + a 2-acyl-sn-glycero-3-phosphocholine. It catalyses the reaction 1-O-hexadecylglycerol + 1,2-di-(9Z-octadecenoyl)-sn-glycero-3-phosphocholine = 1-O-hexadecyl-3-(9Z)-octadecenoylglycerol + (9Z-octadecenoyl)-sn-glycero-3-phosphocholine. The enzyme catalyses 1-O-alkyl-2-acyl-sn-glycerol + a 1,2-diacyl-sn-glycero-3-phosphocholine = 1-O-alkyl-2,3-diacyl-sn-glycerol + a 2-acyl-sn-glycero-3-phosphocholine. It carries out the reaction 1-O-alkyl-2-acyl-sn-glycerol + a 1,2-diacyl-sn-glycero-3-phosphocholine = 1-O-alkyl-2,3-diacyl-sn-glycerol + a 1-acyl-sn-glycero-3-phosphocholine. The catalysed reaction is 1-O-hexadecyl-2-acetyl-sn-glycerol + 1,2-di-(9Z-octadecenoyl)-sn-glycero-3-phosphocholine = 1-O-hexadecyl-2-acetyl-3-(9Z)-octadecenoyl-sn-glycerol + (9Z-octadecenoyl)-sn-glycero-3-phosphocholine. It catalyses the reaction 1-O-hexadecyl-2-O-methyl-sn-glycerol + 1,2-di-(9Z-octadecenoyl)-sn-glycero-3-phosphocholine = 1-O-hexadecyl-2-O-methyl-3-(9Z)-octadecenoyl-sn-glycerol + (9Z-octadecenoyl)-sn-glycero-3-phosphocholine. The enzyme catalyses a 1,2-diacyl-sn-glycero-3-phosphoethanolamine + H2O = a 1-acyl-sn-glycero-3-phosphoethanolamine + a fatty acid + H(+). It carries out the reaction 1-acyl-2-(5Z,8Z,11Z,14Z)-eicosatetraenoyl-sn-glycero-3-phosphoethanolamine + H2O = a 1-acyl-sn-glycero-3-phosphoethanolamine + (5Z,8Z,11Z,14Z)-eicosatetraenoate + H(+). The catalysed reaction is a 1,2-diacyl-sn-glycero-3-phospho-(1'-sn-glycerol) + H2O = 1-acyl-sn-glycero-3-phospho-(1'-sn-glycerol) + a fatty acid + H(+). It catalyses the reaction 1-hexadecanoyl-2-(9Z-octadecenoyl)-sn-glycero-3-phospho-(1'-sn-glycerol) + H2O = 1-hexadecanoyl-sn-glycero-3-phospho-(1'-sn-glycerol) + (9Z)-octadecenoate + H(+). The enzyme catalyses a 1,2-diacyl-sn-glycero-3-phospho-(1'-sn-glycerol) + H2O = 2-acyl-sn-glycero-3-phospho-(1'-sn-glycerol) + a fatty acid + H(+). It carries out the reaction 1-hexadecanoyl-2-(9Z-octadecenoyl)-sn-glycero-3-phospho-(1'-sn-glycerol) + H2O = 2-(9Z-octadecenoyl)-sn-glycero-3-phospho-(1'-sn-glycerol) + hexadecanoate + H(+). Phospholipase sn-2 versus sn-1 positional specificity is affected by the phospholipid composition of membranes. Phospholipase A2 activity toward 1-hexadecanoyl-2-(5Z,8Z,11Z,14Z-eicosatetraenoyl)-sn-glycero-3-phosphocholine (PAPE) is enhanced in the presence of 1,2-dioleoyl-sn-glycero-3-phosphocholine (DOPC), which promotes lipid bilayer formation. O-acyltransferase activity is inhibited by antiarrhythmic drug amiodarone. Its function is as follows. Has dual calcium-independent phospholipase and O-acyltransferase activities with a potential role in glycerophospholipid homeostasis and remodeling of acyl groups of lipophilic alcohols present in acidic cellular compartments. Catalyzes hydrolysis of the ester bond of the fatty acyl group attached at sn-1 or sn-2 position of phospholipids (phospholipase A1 or A2 activity) and transfer it to the hydroxyl group at the first carbon of lipophilic alcohols (O-acyltransferase activity). Among preferred fatty acyl donors are phosphatidylcholines, phosphatidylethanolamines, phosphatidylglycerols and phosphatidylserines. Favors sn-2 over sn-1 deacylation of unsaturated fatty acyl groups of phosphatidylcholines, phosphatidylethanolamines, and phosphatidylglycerols. Among preferred fatty acyl acceptors are natural lipophilic alcohols including short-chain ceramide N-acetyl-sphingosine (C2 ceramide), alkylacylglycerols, monoacylglycerols, and acylethanolamides such as anandamide and oleoylethanolamide. Selectively hydrolyzes the sn-1 fatty acyl group of truncated oxidized phospholipids and may play a role in detoxification of reactive oxidized phospholipids during oxidative stress. Required for normal phospholipid degradation in alveolar macrophages with potential implications in the clearance of pulmonary surfactant, which is mainly composed of dipalmitoylphosphatidylcholine (1,2-dihexadecanoyl-sn-glycero-3-phosphocholine). Involved in the first step of bis(monoacylglycero)phosphate (BMP) de novo synthesis from phosphatidylglycerol (1,2-diacyl-sn-glycero-3-phospho-(1'-sn-glycerol), PG). BMP is an important player in cargo sorting and degradation, regulation of cellular cholesterol levels and intercellular communication. At neutral pH, hydrolyzes the sn-1 fatty acyl group of the lysophosphatidylcholines. The sequence is that of Lysosomal phospholipase A and acyltransferase from Mus musculus (Mouse).